Consider the following 138-residue polypeptide: Large ribosomal subunit protein bL17 (138 aa).

Belongs to the bacterial ribosomal protein bL17 family. Part of the 50S ribosomal subunit. Contacts protein L32.

The chain is Large ribosomal subunit protein bL17 from Phenylobacterium zucineum (strain HLK1).